Consider the following 294-residue polypeptide: Protoheme IX farnesyltransferase (294 aa).

9 consecutive transmembrane segments (helical) span residues 22-42 (VTQL…PELP), 46-66 (IVVA…AINC), 89-109 (ITVP…MWVL), 116-136 (LTMW…TIIL), 143-163 (NIVI…AAVA), 170-190 (AWIL…ALAL), 212-232 (FTQF…MLPF), 234-254 (VGMS…IFVW), and 272-292 (FAYS…DHYL).

Belongs to the UbiA prenyltransferase family. Protoheme IX farnesyltransferase subfamily.

The protein localises to the cell inner membrane. It catalyses the reaction heme b + (2E,6E)-farnesyl diphosphate + H2O = Fe(II)-heme o + diphosphate. It functions in the pathway porphyrin-containing compound metabolism; heme O biosynthesis; heme O from protoheme: step 1/1. Functionally, converts heme B (protoheme IX) to heme O by substitution of the vinyl group on carbon 2 of heme B porphyrin ring with a hydroxyethyl farnesyl side group. In Janthinobacterium sp. (strain Marseille) (Minibacterium massiliensis), this protein is Protoheme IX farnesyltransferase.